An 84-amino-acid polypeptide reads, in one-letter code: Large ribosomal subunit protein bL27 (84 aa).

A disordered region spans residues 1–25 (MAHKKAGGSSKNGRDSAGKRLGVKR).

This sequence belongs to the bacterial ribosomal protein bL27 family.

This chain is Large ribosomal subunit protein bL27, found in Syntrophotalea carbinolica (strain DSM 2380 / NBRC 103641 / GraBd1) (Pelobacter carbinolicus).